The primary structure comprises 1761 residues: Laminin subunit beta-4 (1761 aa).

The first 19 residues, 1 to 19 (MQFQLTLFLHLGWLSYSKA), serve as a signal peptide directing secretion. The region spanning 24–264 (NRGACHPTTG…ALYEMIVRGS (241 aa)) is the Laminin N-terminal domain. Residues asparagine 169, asparagine 229, and asparagine 246 are each glycosylated (N-linked (GlcNAc...) asparagine). 19 disulfide bridges follow: cysteine 265-cysteine 274, cysteine 267-cysteine 295, cysteine 297-cysteine 306, cysteine 309-cysteine 329, cysteine 332-cysteine 341, cysteine 334-cysteine 359, cysteine 362-cysteine 371, cysteine 374-cysteine 392, cysteine 395-cysteine 408, cysteine 397-cysteine 423, cysteine 425-cysteine 434, cysteine 437-cysteine 452, cysteine 455-cysteine 468, cysteine 457-cysteine 475, cysteine 477-cysteine 486, cysteine 489-cysteine 503, cysteine 506-cysteine 518, cysteine 508-cysteine 525, and cysteine 527-cysteine 536. 4 consecutive Laminin EGF-like domains span residues 265–331 (CFCN…ACRS), 332–394 (CSCN…ACIP), 395–454 (CECD…GCQP), and 455–505 (CDCN…GCSP). A Laminin EGF-like 5; truncated domain is found at 506–552 (CDCDIGGAYSNVCSPKNGQCECRPHVTGRSCSEPAPGYFFAPLNFYL). The region spanning 545–763 (FAPLNFYLYE…LIISMSAKLH (219 aa)) is the Laminin IV type B domain. Disulfide bonds link cysteine 769-cysteine 781, cysteine 771-cysteine 788, cysteine 790-cysteine 799, cysteine 802-cysteine 814, cysteine 817-cysteine 829, cysteine 819-cysteine 836, cysteine 838-cysteine 847, cysteine 850-cysteine 860, cysteine 863-cysteine 872, cysteine 865-cysteine 879, cysteine 882-cysteine 891, cysteine 894-cysteine 908, cysteine 913-cysteine 938, cysteine 940-cysteine 949, cysteine 952-cysteine 967, cysteine 970-cysteine 984, cysteine 972-cysteine 991, cysteine 994-cysteine 1003, cysteine 1006-cysteine 1019, cysteine 1022-cysteine 1043, cysteine 1024-cysteine 1050, cysteine 1052-cysteine 1061, cysteine 1064-cysteine 1077, cysteine 1080-cysteine 1092, cysteine 1082-cysteine 1099, cysteine 1101-cysteine 1110, cysteine 1113-cysteine 1125, cysteine 1128-cysteine 1140, cysteine 1130-cysteine 1147, cysteine 1149-cysteine 1158, and cysteine 1161-cysteine 1172. Laminin EGF-like domains lie at 769–816 (CKCH…GCHP), 817–862 (CHCH…SCHP), 863–910 (CPCN…PCRP), 911–969 (CLCP…PCQP), 970–1021 (CACN…TCRR), 1022–1079 (CSCH…GCQS), 1080–1127 (CDCD…RCIP), and 1128–1174 (CDCN…TCLQ). N-linked (GlcNAc...) asparagine glycosylation occurs at asparagine 1016. Asparagine 1055 carries an N-linked (GlcNAc...) asparagine glycan. The domain II stretch occupies residues 1175 to 1375 (CHLCFDQWDH…PDIQILNEKV (201 aa)). 5 N-linked (GlcNAc...) asparagine glycosylation sites follow: asparagine 1223, asparagine 1301, asparagine 1326, asparagine 1333, and asparagine 1354. Positions 1243–1301 (KVKDYHDSVRRQIMQLNEQLKAVYEFQDLKDTIERAKNEADLLLEDLQEEIDLQSSVLN) form a coiled coil. Residues 1376–1408 (CGDPGNVPCVPLPCGGALCTGRKGHRKCRGPGC) form a domain alpha region. The domain I stretch occupies residues 1409–1761 (HGSLTLSTNA…QEKKYARCYS (353 aa)). A coiled-coil region spans residues 1416–1480 (TNALQKAQEA…SDSEEENINL (65 aa)). 6 N-linked (GlcNAc...) asparagine glycosylation sites follow: asparagine 1469, asparagine 1517, asparagine 1587, asparagine 1596, asparagine 1609, and asparagine 1725. The stretch at 1525 to 1759 (IQKHMQLCED…VEQEKKYARC (235 aa)) forms a coiled coil.

Laminin is a complex glycoprotein, consisting of three different polypeptide chains (alpha, beta, gamma), which are bound to each other by disulfide bonds into a cross-shaped molecule comprising one long and three short arms with globules at each end.

The protein resides in the secreted. It localises to the extracellular space. Its subcellular location is the extracellular matrix. The protein localises to the basement membrane. Functionally, binding to cells via a high affinity receptor, laminin is thought to mediate the attachment, migration and organization of cells into tissues during embryonic development by interacting with other extracellular matrix components. The polypeptide is Laminin subunit beta-4 (LAMB4) (Homo sapiens (Human)).